The chain runs to 592 residues: RNA-binding protein 47 (592 aa).

The span at 1-24 shows a compositional bias: low complexity; it reads MTAEDAAAAMSSDSAAGGAASAKA. A disordered region spans residues 1–26; it reads MTAEDAAAAMSSDSAAGGAASAKAPE. 3 RRM domains span residues 73–151, 153–235, and 248–320; these read CEVF…CSVD, CRLF…WAEP, and KILY…LAKP. Asymmetric dimethylarginine; alternate occurs at positions 397 and 408. Omega-N-methylarginine; alternate is present on residues Arg-397 and Arg-408.

It belongs to the RRM RBM47 family. As to quaternary structure, homodimer. Interacts with A1CF. Interacts with APOBEC1; form an mRNA editing complex. Interacts with RBPMS.

It is found in the nucleus. It localises to the cytoplasm. In terms of biological role, single-stranded RNA-binding protein that functions in a variety of RNA processes, including alternative splicing, RNA stabilization, and RNA editing. Functions as an enzyme-substrate adapter for the cytidine deaminase APOBEC1. With APOBEC1 forms an mRNA editing complex involved into cytidine to uridine editing of a variety of mRNA molecules. Through the binding of their 3'UTR, also stabilizes a variety of mRNAs and regulates the expression of genes such as the interferon alpha/beta receptor and interleukin-10. Also involved in the alternative splicing of several genes including TJP1. Binds the pre-mRNA (U)GCAUG consensus sequences in downstream intronic regions of alternative exons, regulating their exclusion and inclusion into mRNAs. Independently of its RNA-binding activity, could negatively regulate MAVS by promoting its lysosomal degradation. In Canis lupus familiaris (Dog), this protein is RNA-binding protein 47.